A 218-amino-acid polypeptide reads, in one-letter code: Octanoyltransferase (218 aa).

In terms of domain architecture, BPL/LPL catalytic spans 34–209; sequence ETSRDELWIV…TFSQELGYQH (176 aa). Substrate is bound by residues 73–80, 140–142, and 153–155; these read RGGQVTYH, SLG, and GLA. Cysteine 171 acts as the Acyl-thioester intermediate in catalysis.

This sequence belongs to the LipB family.

The protein localises to the cytoplasm. The catalysed reaction is octanoyl-[ACP] + L-lysyl-[protein] = N(6)-octanoyl-L-lysyl-[protein] + holo-[ACP] + H(+). It functions in the pathway protein modification; protein lipoylation via endogenous pathway; protein N(6)-(lipoyl)lysine from octanoyl-[acyl-carrier-protein]: step 1/2. Functionally, catalyzes the transfer of endogenously produced octanoic acid from octanoyl-acyl-carrier-protein onto the lipoyl domains of lipoate-dependent enzymes. Lipoyl-ACP can also act as a substrate although octanoyl-ACP is likely to be the physiological substrate. This chain is Octanoyltransferase, found in Shewanella loihica (strain ATCC BAA-1088 / PV-4).